Consider the following 89-residue polypeptide: MAPKKKWSKGKVKDKAQHATVFDKSIIDRINKEVPAFKFISVSVLVDRMKINGSLARIAIRDLAERGVIQKVDQHSKQAIYTRVPAATA.

This sequence belongs to the eukaryotic ribosomal protein eS25 family. In terms of assembly, component of the small ribosomal subunit (SSU). Mature yeast ribosomes consist of a small (40S) and a large (60S) subunit. The 40S small subunit contains 1 molecule of ribosomal RNA (18S rRNA) and at least 33 different proteins. The large 60S subunit contains 3 rRNA molecules (25S, 5.8S and 5S rRNA) and at least 46 different proteins.

The protein localises to the cytoplasm. Functionally, component of the ribosome, a large ribonucleoprotein complex responsible for the synthesis of proteins in the cell. The small ribosomal subunit (SSU) binds messenger RNAs (mRNAs) and translates the encoded message by selecting cognate aminoacyl-transfer RNA (tRNA) molecules. The large subunit (LSU) contains the ribosomal catalytic site termed the peptidyl transferase center (PTC), which catalyzes the formation of peptide bonds, thereby polymerizing the amino acids delivered by tRNAs into a polypeptide chain. The nascent polypeptides leave the ribosome through a tunnel in the LSU and interact with protein factors that function in enzymatic processing, targeting, and the membrane insertion of nascent chains at the exit of the ribosomal tunnel. This chain is Small ribosomal subunit protein eS25A (rps2502), found in Schizosaccharomyces pombe (strain 972 / ATCC 24843) (Fission yeast).